Reading from the N-terminus, the 489-residue chain is UDP-N-acetylmuramate--L-alanine ligase (489 aa).

128-134 provides a ligand contact to ATP; that stretch reads GTHGKTT.

This sequence belongs to the MurCDEF family.

It is found in the cytoplasm. The enzyme catalyses UDP-N-acetyl-alpha-D-muramate + L-alanine + ATP = UDP-N-acetyl-alpha-D-muramoyl-L-alanine + ADP + phosphate + H(+). It functions in the pathway cell wall biogenesis; peptidoglycan biosynthesis. Its function is as follows. Cell wall formation. The protein is UDP-N-acetylmuramate--L-alanine ligase of Shewanella halifaxensis (strain HAW-EB4).